We begin with the raw amino-acid sequence, 300 residues long: Small ribosomal subunit biogenesis GTPase RsgA (300 aa).

A CP-type G domain is found at 69-231 (RSDEMRVKQF…LIDSPGFQAF (163 aa)). GTP is bound by residues 119 to 122 (NKID) and 172 to 180 (GQSGMGKST). 4 residues coordinate Zn(2+): Cys-255, Cys-260, His-262, and Cys-268.

Belongs to the TRAFAC class YlqF/YawG GTPase family. RsgA subfamily. As to quaternary structure, monomer. Associates with 30S ribosomal subunit, binds 16S rRNA. Zn(2+) serves as cofactor.

The protein resides in the cytoplasm. One of several proteins that assist in the late maturation steps of the functional core of the 30S ribosomal subunit. Helps release RbfA from mature subunits. May play a role in the assembly of ribosomal proteins into the subunit. Circularly permuted GTPase that catalyzes slow GTP hydrolysis, GTPase activity is stimulated by the 30S ribosomal subunit. This chain is Small ribosomal subunit biogenesis GTPase RsgA, found in Bordetella bronchiseptica (strain ATCC BAA-588 / NCTC 13252 / RB50) (Alcaligenes bronchisepticus).